Here is a 730-residue protein sequence, read N- to C-terminus: Elongation factor 2 (730 aa).

One can recognise a tr-type G domain in the interval 18–238 (DQIRNFGVIA…YSEGKVDELV (221 aa)). GTP contacts are provided by residues 27-34 (AHVDHGKT), 93-97 (DTPGH), and 147-150 (NKVD). Diphthamide is present on histidine 595. The disordered stretch occupies residues 711–730 (RKRKGLAPDPPTVSEFIDRE).

The protein belongs to the TRAFAC class translation factor GTPase superfamily. Classic translation factor GTPase family. EF-G/EF-2 subfamily.

It is found in the cytoplasm. Functionally, catalyzes the GTP-dependent ribosomal translocation step during translation elongation. During this step, the ribosome changes from the pre-translocational (PRE) to the post-translocational (POST) state as the newly formed A-site-bound peptidyl-tRNA and P-site-bound deacylated tRNA move to the P and E sites, respectively. Catalyzes the coordinated movement of the two tRNA molecules, the mRNA and conformational changes in the ribosome. This Cenarchaeum symbiosum (strain A) protein is Elongation factor 2.